We begin with the raw amino-acid sequence, 465 residues long: Siroheme synthase (465 aa).

Residues 1–203 (MDFLPLFHSL…GRPAEAERLL (203 aa)) are precorrin-2 dehydrogenase /sirohydrochlorin ferrochelatase. NAD(+) contacts are provided by residues 22-23 (EV) and 43-44 (PQ). Residue S128 is modified to Phosphoserine. Residues 217 to 465 (GEVYLVGAGP…AWFEGAREDA (249 aa)) are uroporphyrinogen-III C-methyltransferase. Position 226 (P226) interacts with S-adenosyl-L-methionine. D249 functions as the Proton acceptor in the catalytic mechanism. K271 (proton donor) is an active-site residue. Residues 302 to 304 (GGD), I307, 332 to 333 (TA), M384, and G413 each bind S-adenosyl-L-methionine.

It in the N-terminal section; belongs to the precorrin-2 dehydrogenase / sirohydrochlorin ferrochelatase family. This sequence in the C-terminal section; belongs to the precorrin methyltransferase family.

It carries out the reaction uroporphyrinogen III + 2 S-adenosyl-L-methionine = precorrin-2 + 2 S-adenosyl-L-homocysteine + H(+). It catalyses the reaction precorrin-2 + NAD(+) = sirohydrochlorin + NADH + 2 H(+). The catalysed reaction is siroheme + 2 H(+) = sirohydrochlorin + Fe(2+). It functions in the pathway cofactor biosynthesis; adenosylcobalamin biosynthesis; precorrin-2 from uroporphyrinogen III: step 1/1. It participates in cofactor biosynthesis; adenosylcobalamin biosynthesis; sirohydrochlorin from precorrin-2: step 1/1. The protein operates within porphyrin-containing compound metabolism; siroheme biosynthesis; precorrin-2 from uroporphyrinogen III: step 1/1. Its pathway is porphyrin-containing compound metabolism; siroheme biosynthesis; siroheme from sirohydrochlorin: step 1/1. It functions in the pathway porphyrin-containing compound metabolism; siroheme biosynthesis; sirohydrochlorin from precorrin-2: step 1/1. Multifunctional enzyme that catalyzes the SAM-dependent methylations of uroporphyrinogen III at position C-2 and C-7 to form precorrin-2 via precorrin-1. Then it catalyzes the NAD-dependent ring dehydrogenation of precorrin-2 to yield sirohydrochlorin. Finally, it catalyzes the ferrochelation of sirohydrochlorin to yield siroheme. The sequence is that of Siroheme synthase from Pseudomonas aeruginosa (strain LESB58).